Reading from the N-terminus, the 509-residue chain is Maturase K (509 aa).

This sequence belongs to the intron maturase 2 family. MatK subfamily.

The protein resides in the plastid. It is found in the chloroplast. Functionally, usually encoded in the trnK tRNA gene intron. Probably assists in splicing its own and other chloroplast group II introns. This chain is Maturase K, found in Anthocercis angustifolia (Narrow-leaf ray-flower).